The chain runs to 357 residues: Peptide chain release factor 1 (357 aa).

Gln-236 is subject to N5-methylglutamine.

It belongs to the prokaryotic/mitochondrial release factor family. Post-translationally, methylated by PrmC. Methylation increases the termination efficiency of RF1.

It localises to the cytoplasm. In terms of biological role, peptide chain release factor 1 directs the termination of translation in response to the peptide chain termination codons UAG and UAA. The chain is Peptide chain release factor 1 from Mycolicibacterium vanbaalenii (strain DSM 7251 / JCM 13017 / BCRC 16820 / KCTC 9966 / NRRL B-24157 / PYR-1) (Mycobacterium vanbaalenii).